The following is a 239-amino-acid chain: Cyclo(L-leucyl-L-phenylalanyl) synthase (239 aa).

Serine 37 serves as the catalytic Nucleophile. Residues asparagine 40, 178–182, and tyrosine 202 contribute to the substrate site; that span reads YVLAE.

The protein belongs to the CDPS family. Monomer.

It carries out the reaction L-phenylalanyl-tRNA(Phe) + L-leucyl-tRNA(Leu) = cyclo(L-phenylalanyl-L-leucyl) + tRNA(Phe) + tRNA(Leu) + H(+). Involved in the biosynthesis of albonoursin (cyclo[(alpha,beta-dehydro-Phe)-(alpha,beta-dehydro-Leu)]), an antibacterial peptide. It uses activated amino acids in the form of aminoacyl-tRNAs (aa-tRNAs) as substrates to catalyze the ATP-independent formation of cyclodipeptides which are intermediates in diketopiperazine (DKP) biosynthetic pathways. Catalyzes the formation of cyclo(L-Phe-L-Leu) (cFL) as major products from L-L-phenylalanyl-tRNA(Phe) and L-leucyl-tRNA(Leu). AlbC can also incorporate various nonpolar residues, such as L-phenylalanine, L-leucine, L-tyrosine and L-methionine, and to a much lesser extent L-alanine and L-valine, into cyclodipeptides. Indeed, ten possible cyclodipeptides composed of L-phenylalanine, L-leucine, L-tyrosine and L-methionine are all synthesized to detectable amounts by AlbC. This Streptomyces noursei (Streptomyces albulus) protein is Cyclo(L-leucyl-L-phenylalanyl) synthase (albC).